A 363-amino-acid polypeptide reads, in one-letter code: Protein RecA (363 aa).

An ATP-binding site is contributed by 79 to 86; the sequence is GPESSGKT.

The protein belongs to the RecA family.

It localises to the cytoplasm. Its function is as follows. Can catalyze the hydrolysis of ATP in the presence of single-stranded DNA, the ATP-dependent uptake of single-stranded DNA by duplex DNA, and the ATP-dependent hybridization of homologous single-stranded DNAs. It interacts with LexA causing its activation and leading to its autocatalytic cleavage. This Methylobacterium radiotolerans (strain ATCC 27329 / DSM 1819 / JCM 2831 / NBRC 15690 / NCIMB 10815 / 0-1) protein is Protein RecA.